A 145-amino-acid polypeptide reads, in one-letter code: 3-dehydroquinate dehydratase 1 (145 aa).

Y24 acts as the Proton acceptor in catalysis. Substrate-binding residues include N75, H81, and D88. H101 serves as the catalytic Proton donor. Substrate contacts are provided by residues 102-103 (IS) and R112.

The protein belongs to the type-II 3-dehydroquinase family. Homododecamer.

It catalyses the reaction 3-dehydroquinate = 3-dehydroshikimate + H2O. It participates in metabolic intermediate biosynthesis; chorismate biosynthesis; chorismate from D-erythrose 4-phosphate and phosphoenolpyruvate: step 3/7. Catalyzes a trans-dehydration via an enolate intermediate. The protein is 3-dehydroquinate dehydratase 1 (aroQ1) of Agrobacterium fabrum (strain C58 / ATCC 33970) (Agrobacterium tumefaciens (strain C58)).